Reading from the N-terminus, the 85-residue chain is Kunitz-type serine protease inhibitor homolog beta-bungarotoxin B4 chain (85 aa).

Positions 1 to 24 (MSSGGLLLLLGLLTLCAELTPVSS) are cleaved as a signal peptide. A BPTI/Kunitz inhibitor domain is found at 31–81 (CDKPPDTKICQTVVRAFYYKPSAKRCVQFRYGGCNGNGNHFKSDHLCRCEC). 3 disulfide bridges follow: Cys-31–Cys-81, Cys-40–Cys-64, and Cys-56–Cys-77.

It belongs to the venom Kunitz-type family. Heterodimer; disulfide-linked. The A chains have phospholipase A2 activity and the B chains show homology with the basic protease inhibitors. As to expression, expressed by the venom gland.

It is found in the secreted. In terms of biological role, beta-bungarotoxins are presynaptic neurotoxins of the venom. The B chain is homologous to venom basic protease inhibitors but has no protease inhibitor activity and blocks voltage-gated potassium channels (Kv). The polypeptide is Kunitz-type serine protease inhibitor homolog beta-bungarotoxin B4 chain (Bungarus multicinctus (Many-banded krait)).